Reading from the N-terminus, the 239-residue chain is L-cystine transport system permease protein TcyL (239 aa).

The ABC transmembrane type-1 domain occupies 21–216; it reads LPVTLYILTL…AVAVLFEWFF (196 aa). 4 consecutive transmembrane segments (helical) span residues 25 to 45, 69 to 89, 96 to 116, and 196 to 216; these read LYILTLSLLFGFVLGLFLALP, IMVQLFIVFYGIPALTGLIGI, PFYAAVATYALSNAAAAAEII, and EVYIALSIVYYAVAVLFEWFF.

It belongs to the binding-protein-dependent transport system permease family. The complex is composed of two ATP-binding proteins (TcyN), two transmembrane proteins (TcyL and TcyM) and two solute-binding proteins (TcyJ and TcyK).

The protein localises to the cell membrane. In terms of biological role, part of the ABC transporter complex TcyJKLMN involved in L-cystine import. Probably responsible for the translocation of the substrate across the membrane. Is also involved in cystathionine, djenkolate, and S-methylcysteine transport. The sequence is that of L-cystine transport system permease protein TcyL (tcyL) from Bacillus subtilis (strain 168).